Here is a 277-residue protein sequence, read N- to C-terminus: Inositol monophosphatase 1 (277 aa).

Glutamate 70, aspartate 90, isoleucine 92, and aspartate 93 together coordinate Mg(2+). Glutamate 70 lines the substrate pocket. 92–95 (IDGT) contacts substrate. The residue at position 168 (threonine 168) is a Phosphothreonine. Substrate is bound by residues 194 to 196 (GTA), glutamate 213, and aspartate 220. Residue aspartate 220 coordinates Mg(2+).

It belongs to the inositol monophosphatase superfamily. In terms of assembly, homodimer. The cofactor is Mg(2+).

The protein resides in the cytoplasm. It catalyses the reaction a myo-inositol phosphate + H2O = myo-inositol + phosphate. It carries out the reaction 1D-myo-inositol 1-phosphate + H2O = myo-inositol + phosphate. The catalysed reaction is 1D-myo-inositol 2-phosphate + H2O = myo-inositol + phosphate. The enzyme catalyses 1D-myo-inositol 3-phosphate + H2O = myo-inositol + phosphate. It catalyses the reaction 1D-myo-inositol 4-phosphate + H2O = myo-inositol + phosphate. It carries out the reaction 1D-myo-inositol 5-phosphate + H2O = myo-inositol + phosphate. The catalysed reaction is 1D-myo-inositol 6-phosphate + H2O = myo-inositol + phosphate. The enzyme catalyses scyllo-inositol 1-phosphate + H2O = scyllo-inositol + phosphate. It catalyses the reaction alpha-D-galactose 1-phosphate + H2O = D-galactose + phosphate. It carries out the reaction alpha-D-glucose 1-phosphate + H2O = D-glucose + phosphate. The catalysed reaction is D-glucose 6-phosphate + H2O = D-glucose + phosphate. The enzyme catalyses beta-D-fructose 1-phosphate + H2O = D-fructose + phosphate. It catalyses the reaction glycerol 2-phosphate + H2O = glycerol + phosphate. It carries out the reaction adenosine 2'-phosphate + H2O = adenosine + phosphate. It functions in the pathway polyol metabolism; myo-inositol biosynthesis; myo-inositol from D-glucose 6-phosphate: step 2/2. Inhibited by Li(+), Ca(2+) and Mn(2+), but also by Mg(2+) at concentrations above 3 mM. Phosphatase involved in the dephosphorylation of myo-inositol monophosphate to generate myo-inositol. Is also able to dephosphorylate scyllo-inositol-phosphate, myo-inositol 1,4-diphosphate, scyllo-inositol-1,3-diphosphate and scyllo-inositol-1,4-diphosphate. Also dephosphorylates in vitro other sugar-phosphates including D-galactose-1-phosphate, glucose-1-phosphate, glucose-6-phosphate, fructose-1-phosphate, beta-glycerophosphate and 2'-AMP. Responsible for the provision of inositol required for synthesis of phosphatidylinositol and polyphosphoinositides, and involved in maintaining normal brain function. Has been implicated as the pharmacological target for lithium Li(+) action in brain. This chain is Inositol monophosphatase 1 (IMPA1), found in Sus scrofa (Pig).